The sequence spans 254 residues: MRKMKMNKFNIDNLNLFYGENQALKQICLPIPNRQVTALIGPSGCGKSTLLRCLNRMNDLIEGVKIDGLLSMDGEDVYGNIDVAQLRIKVGMVFQKPNPFPMSIYENVAYGLRAQGIKDKKVLDGVVEQSLRGAALWDEVKDRLKSHAFSLSGGQQQRLCIARTIAMEPEVILMDEPTSALDPIATKKIEDLMESLKKDFTIVIVTHSMQQARRISDRTAFFLMGELVEHDDTHALFSNPRDDRTRGYVNGDFG.

In terms of domain architecture, ABC transporter spans 9–249; the sequence is FNIDNLNLFY…PRDDRTRGYV (241 aa). An ATP-binding site is contributed by 41 to 48; that stretch reads GPSGCGKS.

The protein belongs to the ABC transporter superfamily. Phosphate importer (TC 3.A.1.7) family. As to quaternary structure, the complex is composed of two ATP-binding proteins (PstB), two transmembrane proteins (PstC and PstA) and a solute-binding protein (PstS).

It is found in the cell inner membrane. It catalyses the reaction phosphate(out) + ATP + H2O = ADP + 2 phosphate(in) + H(+). In terms of biological role, part of the ABC transporter complex PstSACB involved in phosphate import. Responsible for energy coupling to the transport system. This chain is Phosphate import ATP-binding protein PstB 2, found in Photobacterium profundum (strain SS9).